The chain runs to 569 residues: 2-succinyl-5-enolpyruvyl-6-hydroxy-3-cyclohexene-1-carboxylate synthase (569 aa).

Belongs to the TPP enzyme family. MenD subfamily. As to quaternary structure, homodimer. Requires Mg(2+) as cofactor. Mn(2+) serves as cofactor. The cofactor is thiamine diphosphate.

The catalysed reaction is isochorismate + 2-oxoglutarate + H(+) = 5-enolpyruvoyl-6-hydroxy-2-succinyl-cyclohex-3-ene-1-carboxylate + CO2. The protein operates within quinol/quinone metabolism; 1,4-dihydroxy-2-naphthoate biosynthesis; 1,4-dihydroxy-2-naphthoate from chorismate: step 2/7. It functions in the pathway quinol/quinone metabolism; menaquinone biosynthesis. Functionally, catalyzes the thiamine diphosphate-dependent decarboxylation of 2-oxoglutarate and the subsequent addition of the resulting succinic semialdehyde-thiamine pyrophosphate anion to isochorismate to yield 2-succinyl-5-enolpyruvyl-6-hydroxy-3-cyclohexene-1-carboxylate (SEPHCHC). This Shewanella sediminis (strain HAW-EB3) protein is 2-succinyl-5-enolpyruvyl-6-hydroxy-3-cyclohexene-1-carboxylate synthase.